A 564-amino-acid chain; its full sequence is Mitochondrial distribution and morphology protein 34-1 (564 aa).

The 195-residue stretch at 1-195 (MAFKFNWSPL…LPAIIHRLSL (195 aa)) folds into the SMP-LTD domain. Polar residues-rich tracts occupy residues 297–322 (PDQN…SQTG) and 329–352 (DNAS…SSYG). Disordered regions lie at residues 297 to 408 (PDQN…VTSA), 414 to 433 (HEQP…DQSL), and 452 to 473 (DLSS…PFNT). Basic residues predominate over residues 359 to 371 (RHSRAHARRRKKR). Positions 383–394 (SDSASVSVSDES) are enriched in low complexity. The span at 396–408 (YTESASAPSVTSA) shows a compositional bias: polar residues. Residues 452 to 466 (DLSSEIVRDRAEPSE) are compositionally biased toward basic and acidic residues.

The protein belongs to the MDM34 family. Component of the ER-mitochondria encounter structure (ERMES) or MDM complex, composed of mmm1, mdm10, mdm12 and mdm34.

Its subcellular location is the mitochondrion outer membrane. Component of the ERMES/MDM complex, which serves as a molecular tether to connect the endoplasmic reticulum (ER) and mitochondria. Components of this complex are involved in the control of mitochondrial shape and protein biogenesis, and function in nonvesicular lipid trafficking between the ER and mitochondria. Mdm34 is required for the interaction of the ER-resident membrane protein mmm1 and the outer mitochondrial membrane-resident beta-barrel protein mdm10. The protein is Mitochondrial distribution and morphology protein 34-1 of Penicillium rubens (strain ATCC 28089 / DSM 1075 / NRRL 1951 / Wisconsin 54-1255) (Penicillium chrysogenum).